Reading from the N-terminus, the 338-residue chain is Ketol-acid reductoisomerase (NADP(+)) (338 aa).

The 181-residue stretch at 1–181 folds into the KARI N-terminal Rossmann domain; the sequence is MKVYYDKDAD…GGTKGGVIET (181 aa). NADP(+) is bound by residues 24-27, Arg-47, and Ser-52; that span reads YGSQ. His-107 is a catalytic residue. An NADP(+)-binding site is contributed by Gly-133. One can recognise a KARI C-terminal knotted domain in the interval 182–327; it reads NFREETETDL…GQLRDMMPWI (146 aa). Mg(2+)-binding residues include Asp-190, Glu-194, Glu-226, and Glu-230. Position 251 (Ser-251) interacts with substrate.

This sequence belongs to the ketol-acid reductoisomerase family. Requires Mg(2+) as cofactor.

The catalysed reaction is (2R)-2,3-dihydroxy-3-methylbutanoate + NADP(+) = (2S)-2-acetolactate + NADPH + H(+). The enzyme catalyses (2R,3R)-2,3-dihydroxy-3-methylpentanoate + NADP(+) = (S)-2-ethyl-2-hydroxy-3-oxobutanoate + NADPH + H(+). Its pathway is amino-acid biosynthesis; L-isoleucine biosynthesis; L-isoleucine from 2-oxobutanoate: step 2/4. It functions in the pathway amino-acid biosynthesis; L-valine biosynthesis; L-valine from pyruvate: step 2/4. Functionally, involved in the biosynthesis of branched-chain amino acids (BCAA). Catalyzes an alkyl-migration followed by a ketol-acid reduction of (S)-2-acetolactate (S2AL) to yield (R)-2,3-dihydroxy-isovalerate. In the isomerase reaction, S2AL is rearranged via a Mg-dependent methyl migration to produce 3-hydroxy-3-methyl-2-ketobutyrate (HMKB). In the reductase reaction, this 2-ketoacid undergoes a metal-dependent reduction by NADPH to yield (R)-2,3-dihydroxy-isovalerate. The chain is Ketol-acid reductoisomerase (NADP(+)) from Dechloromonas aromatica (strain RCB).